A 538-amino-acid chain; its full sequence is Probable inorganic phosphate transporter 1-4 (538 aa).

Over methionine 1–alanine 23 the chain is Cytoplasmic. Residues isoleucine 24–valine 44 form a helical membrane-spanning segment. Residues threonine 45 to serine 69 lie on the Extracellular side of the membrane. A helical membrane pass occupies residues alanine 70–leucine 90. Residues glycine 91–lysine 98 lie on the Cytoplasmic side of the membrane. Residues valine 99–glycine 119 traverse the membrane as a helical segment. At serine 120–lysine 123 the chain is on the extracellular side. Residues glycine 124–tyrosine 144 traverse the membrane as a helical segment. Topologically, residues proline 145–phenylalanine 163 are cytoplasmic. Residues isoleucine 164 to isoleucine 184 traverse the membrane as a helical segment. The Extracellular portion of the chain corresponds to valine 185 to alanine 210. The chain crosses the membrane as a helical span at residues aspartate 211 to tryptophan 231. Residues arginine 232–histidine 294 are Cytoplasmic-facing. The chain crosses the membrane as a helical span at residues leucine 295–phenylalanine 315. Residues glutamine 316–threonine 346 are Extracellular-facing. A helical membrane pass occupies residues leucine 347–isoleucine 367. Topologically, residues glycine 368–arginine 369 are cytoplasmic. Residues phenylalanine 370–proline 390 traverse the membrane as a helical segment. Residues tyrosine 391–threonine 396 lie on the Extracellular side of the membrane. A helical membrane pass occupies residues proline 397–glycine 417. Residues proline 418–glycine 440 are Cytoplasmic-facing. Residues isoleucine 441–alanine 461 traverse the membrane as a helical segment. The Extracellular segment spans residues glutamine 462–asparagine 481. A helical transmembrane segment spans residues serine 482–glutamate 502. Residues serine 503–alanine 538 are Cytoplasmic-facing. Positions serine 507–alanine 538 are disordered. Residues leucine 511–proline 522 are compositionally biased toward acidic residues.

This sequence belongs to the major facilitator superfamily. Phosphate:H(+) symporter (TC 2.A.1.9) family.

It is found in the membrane. High-affinity transporter for external inorganic phosphate. In Oryza sativa subsp. indica (Rice), this protein is Probable inorganic phosphate transporter 1-4 (PHT1-4).